The chain runs to 117 residues: Prefoldin subunit beta (117 aa).

Belongs to the prefoldin subunit beta family. As to quaternary structure, heterohexamer of two alpha and four beta subunits.

Its subcellular location is the cytoplasm. Functionally, molecular chaperone capable of stabilizing a range of proteins. Seems to fulfill an ATP-independent, HSP70-like function in archaeal de novo protein folding. This Thermococcus gammatolerans (strain DSM 15229 / JCM 11827 / EJ3) protein is Prefoldin subunit beta.